The following is a 1300-amino-acid chain: DNA-directed RNA polymerase subunit beta (1300 aa).

Belongs to the RNA polymerase beta chain family. The RNAP catalytic core consists of 2 alpha, 1 beta, 1 beta' and 1 omega subunit. When a sigma factor is associated with the core the holoenzyme is formed, which can initiate transcription.

It carries out the reaction RNA(n) + a ribonucleoside 5'-triphosphate = RNA(n+1) + diphosphate. In terms of biological role, DNA-dependent RNA polymerase catalyzes the transcription of DNA into RNA using the four ribonucleoside triphosphates as substrates. The sequence is that of DNA-directed RNA polymerase subunit beta from Chlorobium chlorochromatii (strain CaD3).